We begin with the raw amino-acid sequence, 410 residues long: Transcription termination factor, mitochondrial (410 aa).

The N-terminal 44 residues, 1–44 (MIRSLLRSFETALKLHAGLNMHPMHCSRRLLFSQYENRASPSRL), are a transit peptide targeting the mitochondrion.

It belongs to the mTERF family.

It is found in the mitochondrion. Functionally, transcription termination factor. Binds promoter DNA and regulates mitochondrial replication and transcription. Transcription termination activity may be polarized with highest termination activity occurring when its DNA-binding site is positioned in the reverse orientation with respect to the incoming RNA polymerase. Required for normal topology and maintenance of mitochondrial DNA (mtDNA) levels. Regulates mtDNA replication by promoting replication pausing, possibly by acting as a natural barrier to replication fork progression. Its function in replication pausing prevents unregulated replication that may occur for example by collisions between the machineries of DNA replication and transcription during mtDNA synthesis. This ensures the incorporation of RNA transcripts into replication intermediates at the replication fork and allow for proper fork progression. Shares mtDNA binding sites with the mitochondrial termination factor mTerf5 and thereby may antagonize mTerf5 function during replication to regulate pausing. Likely to function downstream of Dref which activates genes involved in mtDNA replication and maintenance. This chain is Transcription termination factor, mitochondrial, found in Drosophila melanogaster (Fruit fly).